We begin with the raw amino-acid sequence, 264 residues long: MSDILQTILARKAEEVAQRRAQRPLEDLQVAVASAPPVRGFVRALQAAVANGDPAVIAEVKKASPSKGVIRPDFRPADIAVSYEFGGASCLSVLTDVDFFQGADAYLQQARDACTLPVLRKDFVIDAYQVYEARVLGADCILLIVAALDDTQLATLSELAMSLGMDVLVEVHDIDELERALQVPAPMIGINNRNLRTFEVSLQTTLDMQKAVPRDRLLVTESGILGPQDVALMRDAGIHSFLVGEAFMRVEEPGEGLRQLFFAA.

This sequence belongs to the TrpC family.

It carries out the reaction 1-(2-carboxyphenylamino)-1-deoxy-D-ribulose 5-phosphate + H(+) = (1S,2R)-1-C-(indol-3-yl)glycerol 3-phosphate + CO2 + H2O. It participates in amino-acid biosynthesis; L-tryptophan biosynthesis; L-tryptophan from chorismate: step 4/5. The polypeptide is Indole-3-glycerol phosphate synthase (Stenotrophomonas maltophilia (strain R551-3)).